Reading from the N-terminus, the 501-residue chain is Glycerol kinase (501 aa).

Threonine 12 contributes to the ADP binding site. ATP-binding residues include threonine 12, threonine 13, and serine 14. Threonine 12 is a sn-glycerol 3-phosphate binding site. Arginine 16 lines the ADP pocket. Sn-glycerol 3-phosphate is bound by residues arginine 82, glutamate 83, tyrosine 134, and aspartate 244. Arginine 82, glutamate 83, tyrosine 134, aspartate 244, and glutamine 245 together coordinate glycerol. ADP-binding residues include threonine 266 and glycine 310. Threonine 266, glycine 310, glutamine 314, and glycine 411 together coordinate ATP. ADP is bound by residues glycine 411 and asparagine 415.

Belongs to the FGGY kinase family.

The catalysed reaction is glycerol + ATP = sn-glycerol 3-phosphate + ADP + H(+). Its pathway is polyol metabolism; glycerol degradation via glycerol kinase pathway; sn-glycerol 3-phosphate from glycerol: step 1/1. Inhibited by fructose 1,6-bisphosphate (FBP). In terms of biological role, key enzyme in the regulation of glycerol uptake and metabolism. Catalyzes the phosphorylation of glycerol to yield sn-glycerol 3-phosphate. This Methylorubrum extorquens (strain PA1) (Methylobacterium extorquens) protein is Glycerol kinase.